The chain runs to 494 residues: NADH-quinone oxidoreductase subunit M (494 aa).

14 helical membrane passes run 5-25 (PIIS…LLFI), 36-58 (IYVA…YILI), 90-110 (IAIF…IGSI), 119-139 (EYLV…TAVN), 140-160 (LLLF…IIGV), 173-193 (FFLY…YIYS), 206-226 (LTEN…FIAF), 252-272 (VILA…VLLP), 281-301 (FAIY…LVAL), 318-338 (MGYV…GAIF), 339-359 (QMLS…TLYE), 376-396 (MPVL…LPST), 412-432 (VNVV…VYML), and 459-479 (ILSI…PNSI).

The protein belongs to the complex I subunit 4 family.

It is found in the cell membrane. The enzyme catalyses a quinone + NADH + 5 H(+)(in) = a quinol + NAD(+) + 4 H(+)(out). Functionally, NDH-1 shuttles electrons from NADH, via FMN and iron-sulfur (Fe-S) centers, to quinones in the respiratory chain. Couples the redox reaction to proton translocation (for every two electrons transferred, four hydrogen ions are translocated across the cytoplasmic membrane), and thus conserves the redox energy in a proton gradient. The protein is NADH-quinone oxidoreductase subunit M (nuoM) of Rickettsia typhi (strain ATCC VR-144 / Wilmington).